The sequence spans 251 residues: Imidazole glycerol phosphate synthase subunit HisF (251 aa).

Residues D10 and D129 contribute to the active site.

It belongs to the HisA/HisF family. In terms of assembly, heterodimer of HisH and HisF.

The protein resides in the cytoplasm. It carries out the reaction 5-[(5-phospho-1-deoxy-D-ribulos-1-ylimino)methylamino]-1-(5-phospho-beta-D-ribosyl)imidazole-4-carboxamide + L-glutamine = D-erythro-1-(imidazol-4-yl)glycerol 3-phosphate + 5-amino-1-(5-phospho-beta-D-ribosyl)imidazole-4-carboxamide + L-glutamate + H(+). The protein operates within amino-acid biosynthesis; L-histidine biosynthesis; L-histidine from 5-phospho-alpha-D-ribose 1-diphosphate: step 5/9. Functionally, IGPS catalyzes the conversion of PRFAR and glutamine to IGP, AICAR and glutamate. The HisF subunit catalyzes the cyclization activity that produces IGP and AICAR from PRFAR using the ammonia provided by the HisH subunit. The polypeptide is Imidazole glycerol phosphate synthase subunit HisF (Cutibacterium acnes (strain DSM 16379 / KPA171202) (Propionibacterium acnes)).